A 530-amino-acid polypeptide reads, in one-letter code: Ubiquitin carboxyl-terminal hydrolase 17-like protein 17 (530 aa).

The 296-residue stretch at 80 to 375 (AGLQNMGNTC…QAYVLFYIQK (296 aa)) folds into the USP domain. Residue C89 is the Nucleophile of the active site. Residue H334 is the Proton acceptor of the active site. 2 stretches are compositionally biased toward basic and acidic residues: residues 382–392 (SESVSRGREPR) and 398–411 (DTDRRATQGELKRD). Disordered stretches follow at residues 382 to 411 (SESVSRGREPRALGAEDTDRRATQGELKRD) and 477 to 530 (NHHP…LVCQ). Residues 493 to 505 (TPTHQESMNTGTL) show a composition bias toward polar residues. The span at 510–524 (GRARRSKGKNKHSKR) shows a compositional bias: basic residues.

Belongs to the peptidase C19 family. USP17 subfamily.

The protein localises to the nucleus. Its subcellular location is the endoplasmic reticulum. It catalyses the reaction Thiol-dependent hydrolysis of ester, thioester, amide, peptide and isopeptide bonds formed by the C-terminal Gly of ubiquitin (a 76-residue protein attached to proteins as an intracellular targeting signal).. Functionally, deubiquitinating enzyme that removes conjugated ubiquitin from specific proteins to regulate different cellular processes that may include cell proliferation, progression through the cell cycle, apoptosis, cell migration, and the cellular response to viral infection. The sequence is that of Ubiquitin carboxyl-terminal hydrolase 17-like protein 17 (USP17L17) from Homo sapiens (Human).